We begin with the raw amino-acid sequence, 1597 residues long: Collagen alpha-1(XVII) chain (1597 aa).

2 disordered regions span residues 1–155 (MDVT…PSTR) and 168–188 (GSRS…PIPK). The Cytoplasmic segment spans residues 1–468 (MDVTKKNKRD…CGSCCSWWKW (468 aa)). A nonhelical region (NC16A) region spans residues 1–567 (MDVTKKNKRD…AEQENGNLRG (567 aa)). Residues 9-19 (RDGSEVTERII) are compositionally biased toward basic and acidic residues. 3 stretches are compositionally biased toward polar residues: residues 58-96 (THGS…SPGS), 111-120 (EGSSSGNSSP), and 170-184 (RSAS…SNTL). Positions 146–231 (RLQSASPSTR…WSSTLPAGSS (86 aa)) are necessary for interaction with DST and for the recruitment of DST to hemidesmosome. Residues 469–489 (LLGLLLTWLLLLGLLFGLIAL) traverse the membrane as a helical; Signal-anchor for type II membrane protein segment. At 490–1597 (AEEVRALKAR…KGGSWRLTSY (1108 aa)) the chain is on the extracellular side. Disordered stretches follow at residues 562–857 (NGNL…SSSS), 907–927 (LRGP…FRVR), 970–1041 (LETY…ISSS), 1289–1316 (TAGV…VSGA), and 1344–1394 (FIVG…SSMG). Residues 568–1572 (SPGPKGDMGS…ELPLEEQPLA (1005 aa)) form a triple-helical region region. The span at 604–632 (PKGQKGSVGEPGMEGPMGQRGREGPMGPR) shows a compositional bias: low complexity. Positions 665–674 (GPKGSGGSPG) are enriched in gly residues. Composition is skewed to low complexity over residues 730–748 (PGAV…AGPD) and 774–796 (DPGK…PGRP). Over residues 820-838 (PGPPGPPGAMGPPGPPGAP) the composition is skewed to pro residues. Over residues 847 to 857 (AGESFMGSSSS) the composition is skewed to low complexity. 5 stretches are compositionally biased toward pro residues: residues 910–922 (PPGP…PPDL), 977–986 (PPGPPGPPGP), 1023–1035 (PGPP…PGPP), 1296–1310 (PGPP…PRGP), and 1348–1357 (PPGPPGPQGP). Residues 1377–1393 (SSHSASVSRGSSYSSSM) are compositionally biased toward low complexity. N-linked (GlcNAc...) asparagine glycosylation is present at Asn-1493. The segment at 1531-1566 (GHPALEGTREKKETKVTKSMRGGEREASPSSHELPL) is disordered. The span at 1537–1557 (GTREKKETKVTKSMRGGEREA) shows a compositional bias: basic and acidic residues. Residues 1573–1597 (SVLAMAYGVHVKISPKGGSWRLTSY) form a nonhelical region (NC1) region.

Homotrimers of alpha 1(XVII)chains. Interacts (via cytoplasmic region) with ITGB4 (via cytoplasmic region). Interacts (via cytoplasmic region) with DST (via N-terminus). Interacts (via N-terminus) with PLEC. Interacts (via cytoplasmic region) with DSP. The intracellular/endo domain is disulfide-linked. Post-translationally, prolines at the third position of the tripeptide repeating unit (G-X-Y) are hydroxylated in some or all of the chains. In terms of processing, the ectodomain is shedded from the surface of keratinocytes resulting in a 120-kDa soluble form, also named as 120 kDa linear IgA disease antigen homolog. The shedding is mediated by membrane-bound metalloproteases. As to expression, upper lamina lucidalhemidesmosome.

Its subcellular location is the cell junction. The protein resides in the hemidesmosome. It localises to the membrane. It is found in the secreted. The protein localises to the extracellular space. Its subcellular location is the extracellular matrix. The protein resides in the basement membrane. Its function is as follows. The 120 kDa linear IgA disease antigen homolog is an anchoring filament component involved in dermal-epidermal cohesion. This is Collagen alpha-1(XVII) chain (COL17A1) from Canis lupus familiaris (Dog).